The primary structure comprises 104 residues: Ribonucleotide reductase inhibitor protein SML1 (104 aa).

Met-1 is modified (N-acetylmethionine). Residues 43–62 are disordered; it reads PMLSTQNSMGSSASASASSL. 3 positions are modified to phosphoserine; by DUN1: Ser-56, Ser-58, and Ser-60.

Homodimer; disulfide-linked. Interacts with RNR1. In terms of processing, phosphorylated by DUN1, a downstream effector of the Mec1/Rad53 checkpoint pathway, in response to DNA damage. This promotes ubiquitination of SML1 and targets it for degradation by the 26S proteasome.

It localises to the nucleus. Its subcellular location is the cytoplasm. Its function is as follows. Strong inhibitor of ribonucleotide reductase (RNR1) and is involved in regulating dNTP production. The chain is Ribonucleotide reductase inhibitor protein SML1 (SML1) from Saccharomyces cerevisiae (strain ATCC 204508 / S288c) (Baker's yeast).